A 180-amino-acid chain; its full sequence is MTDAGEATPVAELIASLTRQVPDFPKPGIQFKDLTPLFADATAMTAVTGALARHASGADLVAGIDSRGFLVAAAVADRLHTGVLAIRKGGKLPPPVHAERYDLEYGSATLEIPADGIDLRGRRIVIIDDVLATGGTLAAAARLLRRTGATVTAAAVVFELGALGGRAALAPLPVHRLTCQ.

It belongs to the purine/pyrimidine phosphoribosyltransferase family. In terms of assembly, homodimer.

The protein resides in the cytoplasm. The enzyme catalyses AMP + diphosphate = 5-phospho-alpha-D-ribose 1-diphosphate + adenine. It participates in purine metabolism; AMP biosynthesis via salvage pathway; AMP from adenine: step 1/1. In terms of biological role, catalyzes a salvage reaction resulting in the formation of AMP, that is energically less costly than de novo synthesis. This is Adenine phosphoribosyltransferase from Mycobacterium avium (strain 104).